An 808-amino-acid chain; its full sequence is DNA ligase (808 aa).

The interval 1–30 (MSISDDISPVPPAPVSEPNAGQDAGQDAAP) is disordered. The span at 18–30 (PNAGQDAGQDAAP) shows a compositional bias: low complexity. Residues 61 to 65 (DAEYD), 110 to 111 (SL), and Asp-141 contribute to the NAD(+) site. Catalysis depends on Lys-143, which acts as the N6-AMP-lysine intermediate. The NAD(+) site is built by Arg-164, Glu-202, Lys-334, and Lys-358. Positions 453, 456, 471, and 476 each coordinate Zn(2+). Residues 644–733 (EGSGPLAGLR…GGDVPEDGDG (90 aa)) enclose the BRCT domain. Residues 720–808 (LEGRGGDVPE…PRKKDQHSLL (89 aa)) form a disordered region. Residues 727-742 (VPEDGDGAPGNEDEAP) show a composition bias toward acidic residues. Residues 746–773 (ADVPAAPEVLADAPAAISADASSGVAPG) are compositionally biased toward low complexity. Basic and acidic residues predominate over residues 779 to 792 (DRADMTDRTVRTDS).

This sequence belongs to the NAD-dependent DNA ligase family. LigA subfamily. Mg(2+) serves as cofactor. Mn(2+) is required as a cofactor.

The catalysed reaction is NAD(+) + (deoxyribonucleotide)n-3'-hydroxyl + 5'-phospho-(deoxyribonucleotide)m = (deoxyribonucleotide)n+m + AMP + beta-nicotinamide D-nucleotide.. Its function is as follows. DNA ligase that catalyzes the formation of phosphodiester linkages between 5'-phosphoryl and 3'-hydroxyl groups in double-stranded DNA using NAD as a coenzyme and as the energy source for the reaction. It is essential for DNA replication and repair of damaged DNA. This Nitratidesulfovibrio vulgaris (strain DSM 19637 / Miyazaki F) (Desulfovibrio vulgaris) protein is DNA ligase.